A 932-amino-acid chain; its full sequence is Glycine dehydrogenase (decarboxylating) (932 aa).

K685 is subject to N6-(pyridoxal phosphate)lysine.

This sequence belongs to the GcvP family. As to quaternary structure, the glycine cleavage system is composed of four proteins: P, T, L and H. Requires pyridoxal 5'-phosphate as cofactor.

The enzyme catalyses N(6)-[(R)-lipoyl]-L-lysyl-[glycine-cleavage complex H protein] + glycine + H(+) = N(6)-[(R)-S(8)-aminomethyldihydrolipoyl]-L-lysyl-[glycine-cleavage complex H protein] + CO2. Functionally, the glycine cleavage system catalyzes the degradation of glycine. The P protein binds the alpha-amino group of glycine through its pyridoxal phosphate cofactor; CO(2) is released and the remaining methylamine moiety is then transferred to the lipoamide cofactor of the H protein. The sequence is that of Glycine dehydrogenase (decarboxylating) from Brucella suis biovar 1 (strain 1330).